We begin with the raw amino-acid sequence, 266 residues long: MASDKPRNNDSIGKTLLVVVILCLVCSVVVAGAAVGLKAKQQEQRLLDKQRNILAVAGLLQPRMLAEEVQQAFATRIEPRLLDLQSGEFLKQDPATFDRSQALRDNQMSIALTPAQDIAGIRRRANVVEIYLVRGDGGQINKVILPIYGSGLWSMMYAFVAIDTDGKTVRGITYYDHGETPGLGGEIENPIWRNQWIGKRLFDDQGQPAIRIVKGRAPANDPHAVDGLSGATLTSNGVQNSFNFWLGENGFGPFLKKVREGALKNG.

Residues 16 to 36 (LLVVVILCLVCSVVVAGAAVG) form a helical membrane-spanning segment. Residue Thr232 is modified to FMN phosphoryl threonine.

It belongs to the NqrC family. As to quaternary structure, composed of six subunits; NqrA, NqrB, NqrC, NqrD, NqrE and NqrF. FMN serves as cofactor.

It localises to the cell inner membrane. The enzyme catalyses a ubiquinone + n Na(+)(in) + NADH + H(+) = a ubiquinol + n Na(+)(out) + NAD(+). Functionally, NQR complex catalyzes the reduction of ubiquinone-1 to ubiquinol by two successive reactions, coupled with the transport of Na(+) ions from the cytoplasm to the periplasm. NqrA to NqrE are probably involved in the second step, the conversion of ubisemiquinone to ubiquinol. This chain is Na(+)-translocating NADH-quinone reductase subunit C, found in Yersinia pestis.